The following is an 81-amino-acid chain: Putative CNGA1-overlapping antisense gene protein (81 aa).

In terms of tissue distribution, expressed in brain, notably in regions involved in long-term potentiation and long-term depression, such as hippocampal CA1 and CA3, dentate gyrus and cerebellar Purkinje layer.

This Homo sapiens (Human) protein is Putative CNGA1-overlapping antisense gene protein.